The primary structure comprises 408 residues: MTDTLVLAYSGGLDTSVAIPWLKDKGYDVIAVVLDVGQHGKNLNEIQAKALKVGAKQSIVIDAKAEFADKYVAPVIKANMMYEGEYPMVSALSRPLIIKKLVDIAHENDAVAIAHGSTGHGNDQVRFEAAIHALDPDMKIEAPIRDFQWSREEEIQYAQEHDVPVPIDLDSPYSIDENLWGRANEAGILENPWNQAPEDAFALTTAIEDAPDTPEFIDVTFEAGVPVALNGEVLSLEKLIVAVNEIAGKHGIGRIDHIENRLVGIKSREIYEAPAAAVLMTAHKDLEDLTLERDVAHFKPIVEQQLANLVYEAKWVSPLFDSLMAFIDSTQQNVNGVVKMKLFKGNATAVARQSEHNSLYDEDLATYTSSSSFDQASAVGFIKLWTLSNTVYEQVNHVHSQAKKNTVK.

8–16 (AYSGGLDTS) provides a ligand contact to ATP. Tyr-86 contacts L-citrulline. Gly-116 is a binding site for ATP. Residues Thr-118, Asn-122, and Asp-123 each coordinate L-aspartate. Asn-122 contributes to the L-citrulline binding site. 4 residues coordinate L-citrulline: Arg-126, Ser-174, Glu-259, and Tyr-271.

It belongs to the argininosuccinate synthase family. Type 1 subfamily. As to quaternary structure, homotetramer.

The protein resides in the cytoplasm. The enzyme catalyses L-citrulline + L-aspartate + ATP = 2-(N(omega)-L-arginino)succinate + AMP + diphosphate + H(+). It functions in the pathway amino-acid biosynthesis; L-arginine biosynthesis; L-arginine from L-ornithine and carbamoyl phosphate: step 2/3. The polypeptide is Argininosuccinate synthase (Leuconostoc mesenteroides subsp. mesenteroides (strain ATCC 8293 / DSM 20343 / BCRC 11652 / CCM 1803 / JCM 6124 / NCDO 523 / NBRC 100496 / NCIMB 8023 / NCTC 12954 / NRRL B-1118 / 37Y)).